The primary structure comprises 312 residues: Ribosomal protein L11 methyltransferase (312 aa).

Positions 160, 181, 203, and 246 each coordinate S-adenosyl-L-methionine.

This sequence belongs to the methyltransferase superfamily. PrmA family.

The protein localises to the cytoplasm. It catalyses the reaction L-lysyl-[protein] + 3 S-adenosyl-L-methionine = N(6),N(6),N(6)-trimethyl-L-lysyl-[protein] + 3 S-adenosyl-L-homocysteine + 3 H(+). Methylates ribosomal protein L11. This chain is Ribosomal protein L11 methyltransferase, found in Staphylococcus aureus (strain USA300).